Reading from the N-terminus, the 193-residue chain is Xanthine phosphoribosyltransferase (193 aa).

Positions 20 and 27 each coordinate xanthine. 128-132 (ANGQA) lines the 5-phospho-alpha-D-ribose 1-diphosphate pocket. A xanthine-binding site is contributed by lysine 156.

It belongs to the purine/pyrimidine phosphoribosyltransferase family. Xpt subfamily. In terms of assembly, homodimer.

The protein resides in the cytoplasm. It catalyses the reaction XMP + diphosphate = xanthine + 5-phospho-alpha-D-ribose 1-diphosphate. It functions in the pathway purine metabolism; XMP biosynthesis via salvage pathway; XMP from xanthine: step 1/1. Converts the preformed base xanthine, a product of nucleic acid breakdown, to xanthosine 5'-monophosphate (XMP), so it can be reused for RNA or DNA synthesis. This Streptococcus equi subsp. zooepidemicus (strain H70) protein is Xanthine phosphoribosyltransferase.